The primary structure comprises 143 residues: Large ribosomal subunit protein uL16c (143 aa).

This sequence belongs to the universal ribosomal protein uL16 family. As to quaternary structure, part of the 50S ribosomal subunit.

The protein resides in the plastid. The protein localises to the chloroplast. This is Large ribosomal subunit protein uL16c from Chlorokybus atmophyticus (Soil alga).